Here is a 540-residue protein sequence, read N- to C-terminus: Chaperonin GroEL 1 (540 aa).

ATP contacts are provided by residues 29–32 (TLGP), 86–90 (DGTTT), Gly-413, 478–480 (NAA), and Asp-494.

It belongs to the chaperonin (HSP60) family. As to quaternary structure, forms a cylinder of 14 subunits composed of two heptameric rings stacked back-to-back. Interacts with the co-chaperonin GroES.

The protein localises to the cytoplasm. The catalysed reaction is ATP + H2O + a folded polypeptide = ADP + phosphate + an unfolded polypeptide.. Its function is as follows. Together with its co-chaperonin GroES, plays an essential role in assisting protein folding. The GroEL-GroES system forms a nano-cage that allows encapsulation of the non-native substrate proteins and provides a physical environment optimized to promote and accelerate protein folding. In Mycobacterium sp. (strain JLS), this protein is Chaperonin GroEL 1.